The sequence spans 437 residues: Elongation factor 1-gamma (437 aa).

The residue at position 2 (A2) is an N-acetylalanine. In terms of domain architecture, GST N-terminal spans 2–87; it reads AAGTLYTYPE…YVSNEELRGS (86 aa). One can recognise a GST C-terminal domain in the interval 88-216; sequence TPEAAAQVVQ…VKLCEKMAQF (129 aa). An N6-acetyllysine mark is found at K147 and K212. Positions 221-254 are enriched in basic and acidic residues; it reads FAESQPKKDTPRKEKGSREEKQKPQAERKEEKKA. The tract at residues 221–268 is disordered; sequence FAESQPKKDTPRKEKGSREEKQKPQAERKEEKKAAAPAPEEEMDECEQ. A Glycyl lysine isopeptide (Lys-Gly) (interchain with G-Cter in SUMO1) cross-link involves residue K253. An EF-1-gamma C-terminal domain is found at 276–437; it reads AKDPFAHLPK…KAFNQGKIFK (162 aa). K285 is covalently cross-linked (Glycyl lysine isopeptide (Lys-Gly) (interchain with G-Cter in SUMO2)). N6-acetyllysine is present on K401. K434 carries the post-translational modification N6-acetyllysine; alternate. K434 is subject to N6-malonyllysine; alternate.

As to quaternary structure, EF-1 is composed of four subunits: alpha, beta, delta, and gamma.

Probably plays a role in anchoring the complex to other cellular components. The sequence is that of Elongation factor 1-gamma (EEF1G) from Equus caballus (Horse).